A 69-amino-acid polypeptide reads, in one-letter code: Small, acid-soluble spore protein C1 (69 aa).

It belongs to the alpha/beta-type SASP family.

SASP are bound to spore DNA. They are double-stranded DNA-binding proteins that cause DNA to change to an a-like conformation. They protect the DNA backbone from chemical and enzymatic cleavage and are thus involved in dormant spore's high resistance to UV light. The protein is Small, acid-soluble spore protein C1 (SASP-C1) of Priestia megaterium (Bacillus megaterium).